The primary structure comprises 564 residues: Pachytene checkpoint protein 2 (564 aa).

Residue 314–321 (GPPGTGKT) coordinates ATP.

It belongs to the AAA ATPase family. PCH2 subfamily.

The protein resides in the nucleus. Its subcellular location is the nucleolus. It is found in the chromosome. Its function is as follows. Required for the pachytene checkpoint, the meiotic checkpoint that prevents chromosome segregation when defects in recombination and synaptonemal complex formation occurred. Represses meiotic recombination in the rDNA, probably by excluding the meiosis-specific protein HOP1 from the nucleolar region. The chain is Pachytene checkpoint protein 2 (PCH2) from Saccharomyces cerevisiae (strain ATCC 204508 / S288c) (Baker's yeast).